The chain runs to 63 residues: Small ribosomal subunit protein uS14 (63 aa).

4 residues coordinate Zn(2+): Cys26, Cys29, Cys42, and Cys45.

Belongs to the universal ribosomal protein uS14 family. Zinc-binding uS14 subfamily. Part of the 30S ribosomal subunit. Contacts proteins S3 and S10. Zn(2+) serves as cofactor.

Binds 16S rRNA, required for the assembly of 30S particles and may also be responsible for determining the conformation of the 16S rRNA at the A site. The protein is Small ribosomal subunit protein uS14 of Gloeobacter violaceus (strain ATCC 29082 / PCC 7421).